The chain runs to 212 residues: ATP-dependent Clp protease proteolytic subunit (212 aa).

Residue S114 is the Nucleophile of the active site. H139 is an active-site residue.

The protein belongs to the peptidase S14 family. In terms of assembly, fourteen ClpP subunits assemble into 2 heptameric rings which stack back to back to give a disk-like structure with a central cavity, resembling the structure of eukaryotic proteasomes.

The protein localises to the cytoplasm. The enzyme catalyses Hydrolysis of proteins to small peptides in the presence of ATP and magnesium. alpha-casein is the usual test substrate. In the absence of ATP, only oligopeptides shorter than five residues are hydrolyzed (such as succinyl-Leu-Tyr-|-NHMec, and Leu-Tyr-Leu-|-Tyr-Trp, in which cleavage of the -Tyr-|-Leu- and -Tyr-|-Trp bonds also occurs).. Cleaves peptides in various proteins in a process that requires ATP hydrolysis. Has a chymotrypsin-like activity. Plays a major role in the degradation of misfolded proteins. This chain is ATP-dependent Clp protease proteolytic subunit, found in Laribacter hongkongensis (strain HLHK9).